The chain runs to 357 residues: GTPase Obg (357 aa).

The 159-residue stretch at 1 to 159 (MKFVDEAFID…KSLKLELKVL (159 aa)) folds into the Obg domain. The OBG-type G domain maps to 160-334 (ADVGLLGMPN…LVQSIFQHVH (175 aa)). GTP-binding positions include 166–173 (GMPNAGKS), 191–195 (FTTLH), 213–216 (DIPG), 284–287 (NKLD), and 315–317 (SAL). Positions 173 and 193 each coordinate Mg(2+).

The protein belongs to the TRAFAC class OBG-HflX-like GTPase superfamily. OBG GTPase family. In terms of assembly, monomer. Mg(2+) serves as cofactor.

It is found in the cytoplasm. Functionally, an essential GTPase which binds GTP, GDP and possibly (p)ppGpp with moderate affinity, with high nucleotide exchange rates and a fairly low GTP hydrolysis rate. Plays a role in control of the cell cycle, stress response, ribosome biogenesis and in those bacteria that undergo differentiation, in morphogenesis control. The polypeptide is GTPase Obg (Acidovorax sp. (strain JS42)).